Here is a 63-residue protein sequence, read N- to C-terminus: Gallinacin-4 (63 aa).

The N-terminal stretch at M1 to V19 is a signal peptide. Positions G20–P25 are excised as a propeptide. Intrachain disulfides connect C31–C59, C38–C53, and C43–C60.

The protein belongs to the beta-defensin family. As to expression, strong expression in the bone marrow and testis. Widely expressed. Weak expression in the ovarian stroma, but not expressed in the ovarian follicles.

It localises to the secreted. Its subcellular location is the cytoplasmic granule. Has bactericidal activity. Potent activity against S.typhimurium and S.entiriditis. In Gallus gallus (Chicken), this protein is Gallinacin-4 (GAL4).